Consider the following 297-residue polypeptide: Acetylglutamate kinase (297 aa).

Substrate contacts are provided by residues 70 to 71, Arg92, and Asn194; that span reads GG.

Belongs to the acetylglutamate kinase family. ArgB subfamily.

The protein resides in the cytoplasm. The catalysed reaction is N-acetyl-L-glutamate + ATP = N-acetyl-L-glutamyl 5-phosphate + ADP. It participates in amino-acid biosynthesis; L-arginine biosynthesis; N(2)-acetyl-L-ornithine from L-glutamate: step 2/4. In terms of biological role, catalyzes the ATP-dependent phosphorylation of N-acetyl-L-glutamate. The chain is Acetylglutamate kinase from Herminiimonas arsenicoxydans.